Reading from the N-terminus, the 68-residue chain is Large ribosomal subunit protein bL35 (68 aa).

The tract at residues 29 to 68 is disordered; the sequence is GGVSHYNTKKSSKRKRQGRKPQYVPKNLEHKVKALLPNDV. Basic residues predominate over residues 35 to 47; the sequence is NTKKSSKRKRQGR.

The protein belongs to the bacterial ribosomal protein bL35 family.

The protein is Large ribosomal subunit protein bL35 of Sulfurihydrogenibium sp. (strain YO3AOP1).